Reading from the N-terminus, the 198-residue chain is Heat shock 70 kDa protein (198 aa).

Residues 170 to 191 (GGGVPSGMPGGMPGAGGGGGKG) are compositionally biased toward gly residues. A disordered region spans residues 170-198 (GGGVPSGMPGGMPGAGGGGGKGPTIEEVD).

It belongs to the heat shock protein 70 family.

The polypeptide is Heat shock 70 kDa protein (Schistosoma japonicum (Blood fluke)).